The primary structure comprises 95 residues: Small ribosomal subunit protein uS19 (95 aa).

The tract at residues 73 to 95 is disordered; sequence EFSPTRTYRGHGADKNAKGSKKK.

The protein belongs to the universal ribosomal protein uS19 family.

In terms of biological role, protein S19 forms a complex with S13 that binds strongly to the 16S ribosomal RNA. This chain is Small ribosomal subunit protein uS19, found in Deinococcus radiodurans (strain ATCC 13939 / DSM 20539 / JCM 16871 / CCUG 27074 / LMG 4051 / NBRC 15346 / NCIMB 9279 / VKM B-1422 / R1).